Here is a 642-residue protein sequence, read N- to C-terminus: Threonine--tRNA ligase (642 aa).

A TGS domain is found at 1–61; sequence MPVITLPDGS…ETDVDLAIIT (61 aa). Residues 243-534 are catalytic; sequence DHRKIGKQLD…LIEEYAGKFP (292 aa). 3 residues coordinate Zn(2+): Cys-334, His-385, and His-511.

Belongs to the class-II aminoacyl-tRNA synthetase family. As to quaternary structure, homodimer. Zn(2+) serves as cofactor.

The protein localises to the cytoplasm. It catalyses the reaction tRNA(Thr) + L-threonine + ATP = L-threonyl-tRNA(Thr) + AMP + diphosphate + H(+). Catalyzes the attachment of threonine to tRNA(Thr) in a two-step reaction: L-threonine is first activated by ATP to form Thr-AMP and then transferred to the acceptor end of tRNA(Thr). Also edits incorrectly charged L-seryl-tRNA(Thr). The polypeptide is Threonine--tRNA ligase (Shewanella loihica (strain ATCC BAA-1088 / PV-4)).